We begin with the raw amino-acid sequence, 303 residues long: MEAYFATFRSPGPELLKVGFFTLRWYGLLIAFAVLIGLNLSNKLASIKGLSKNLINDLLPILVISSIIGARAYYVIFEWRNYSGSNFWSSIQAFGLTISIPTFIKVWQGGIAIHGALLAGTIAILIFCRLKQEDFWDVLDVLIPSVALGQAIGRWGNFFNNEAFGLPTDLPWKLFIPYPYRPEFFLDNNYFHPTFLYESIWNILLFLCLISLIRLSIKGKLKLPSGSLSCVYAIIYSLGRVWIEGLRTDPLCLGGVPPFCIGGIRIAQLISTILFGLGLLGLFWIYQRKKKLPSLGIIGRKHQ.

Transmembrane regions (helical) follow at residues 18–38 (VGFF…LIGL), 58–78 (LLPI…VIFE), and 107–127 (WQGG…ILIF). A 1,2-diacyl-sn-glycero-3-phospho-(1'-sn-glycerol) is bound at residue R154. The next 2 helical transmembrane spans lie at 193–213 (PTFL…ISLI) and 266–286 (IAQL…FWIY).

It belongs to the Lgt family.

It localises to the cell inner membrane. The enzyme catalyses L-cysteinyl-[prolipoprotein] + a 1,2-diacyl-sn-glycero-3-phospho-(1'-sn-glycerol) = an S-1,2-diacyl-sn-glyceryl-L-cysteinyl-[prolipoprotein] + sn-glycerol 1-phosphate + H(+). Its pathway is protein modification; lipoprotein biosynthesis (diacylglyceryl transfer). In terms of biological role, catalyzes the transfer of the diacylglyceryl group from phosphatidylglycerol to the sulfhydryl group of the N-terminal cysteine of a prolipoprotein, the first step in the formation of mature lipoproteins. The chain is Phosphatidylglycerol--prolipoprotein diacylglyceryl transferase from Prochlorococcus marinus (strain MIT 9211).